Here is a 364-residue protein sequence, read N- to C-terminus: Popeye domain-containing protein 2 (364 aa).

N-linked (GlcNAc...) asparagine glycosylation is present at Asn4. The next 2 helical transmembrane spans lie at Leu37–Leu57 and Ile77–Tyr97. Residues Ala276–Ser333 are disordered. Residues Thr300–Pro309 are compositionally biased toward polar residues. Phosphothreonine is present on Thr361.

Belongs to the popeye family. As to expression, expressed predominantly in the heart and in the skeletal muscle.

Its subcellular location is the membrane. It localises to the cell membrane. The protein resides in the sarcolemma. In terms of biological role, important for the maintenance of cardiac function. Plays a regulatory function in heart rate dynamics mediated, at least in part, through cAMP-binding and, probably, by increasing cell surface expression of the potassium channel KCNK2 and enhancing current density. This chain is Popeye domain-containing protein 2 (POPDC2), found in Homo sapiens (Human).